The sequence spans 82 residues: UPF0213 protein SH2523 (82 aa).

Residues alanine 2–lysine 77 enclose the GIY-YIG domain.

Belongs to the UPF0213 family.

This Staphylococcus haemolyticus (strain JCSC1435) protein is UPF0213 protein SH2523.